The sequence spans 529 residues: Putative E3 ubiquitin-protein ligase ARI4 (529 aa).

Residues 1–22 (MDDEYMSLEEEEDNCYPSEFDD) show a composition bias toward acidic residues. The interval 1–23 (MDDEYMSLEEEEDNCYPSEFDDH) is disordered. The tract at residues 115–327 (KTMKCDICME…IAGHSCGRYK (213 aa)) is TRIAD supradomain. Zn(2+) contacts are provided by C119, C122, C137, H139, C142, C145, C164, C169, C206, C212, C230, C232, C237, C240, H245, C250, C277, and C280. The RING-type 1 zinc finger occupies 119-169 (CDICMEEDLSKYAMTRMECGHRFCNDCWKEHFTVRINEGEGKRIRCMAYKC). The segment at 186 to 250 (EKFDRFLIES…LSESHSPCSC (65 aa)) adopts an IBR-type zinc-finger fold. The segment at 277-305 (CPKCSKPIQKRDGCNHMTCKCGQHFCWLC) adopts an RING-type 2; atypical zinc-finger fold. Residue C290 is part of the active site. Zn(2+) contacts are provided by C295, C297, C302, C305, H313, and C323.

The protein belongs to the RBR family. Ariadne subfamily. Requires Zn(2+) as cofactor.

It carries out the reaction [E2 ubiquitin-conjugating enzyme]-S-ubiquitinyl-L-cysteine + [acceptor protein]-L-lysine = [E2 ubiquitin-conjugating enzyme]-L-cysteine + [acceptor protein]-N(6)-ubiquitinyl-L-lysine.. It participates in protein modification; protein ubiquitination. In terms of biological role, might act as an E3 ubiquitin-protein ligase, or as part of E3 complex, which accepts ubiquitin from specific E2 ubiquitin-conjugating enzymes and then transfers it to substrates. The protein is Putative E3 ubiquitin-protein ligase ARI4 (ARI4) of Arabidopsis thaliana (Mouse-ear cress).